Consider the following 643-residue polypeptide: 1-deoxy-D-xylulose-5-phosphate synthase (643 aa).

Residues histidine 72 and 113-115 (GHA) each bind thiamine diphosphate. Aspartate 144 contributes to the Mg(2+) binding site. Thiamine diphosphate-binding positions include 145-146 (GA), asparagine 174, tyrosine 287, and glutamate 370. Position 174 (asparagine 174) interacts with Mg(2+).

The protein belongs to the transketolase family. DXPS subfamily. In terms of assembly, homodimer. Requires Mg(2+) as cofactor. Thiamine diphosphate is required as a cofactor.

The catalysed reaction is D-glyceraldehyde 3-phosphate + pyruvate + H(+) = 1-deoxy-D-xylulose 5-phosphate + CO2. The protein operates within metabolic intermediate biosynthesis; 1-deoxy-D-xylulose 5-phosphate biosynthesis; 1-deoxy-D-xylulose 5-phosphate from D-glyceraldehyde 3-phosphate and pyruvate: step 1/1. In terms of biological role, catalyzes the acyloin condensation reaction between C atoms 2 and 3 of pyruvate and glyceraldehyde 3-phosphate to yield 1-deoxy-D-xylulose-5-phosphate (DXP). This is 1-deoxy-D-xylulose-5-phosphate synthase from Prochlorococcus marinus (strain MIT 9211).